The sequence spans 124 residues: MPTVKQLIRNARQPIRNARKSAALKGCPQRRGTCARVYTINPKKPNSALRKVARVRLTSGFEITAYIPGIGHNLQEHSVVLVRGGRVKDLPGVRYRIIRGALDAVAVKNRQQGRSKYGVKKPKK.

It belongs to the universal ribosomal protein uS12 family. As to quaternary structure, part of the 30S ribosomal subunit.

It is found in the plastid. It localises to the chloroplast. Its function is as follows. With S4 and S5 plays an important role in translational accuracy. Located at the interface of the 30S and 50S subunits. The chain is Small ribosomal subunit protein uS12c (rps12) from Oryza nivara (Indian wild rice).